The primary structure comprises 278 residues: Small ribosomal subunit protein uS3 (278 aa).

Positions 39–107 (LRKAISKKYV…KVQLNIVEIS (69 aa)) constitute a KH type-2 domain. Residues 255–278 (AEIPAEEKPKRVVKKAENITKEEE) are disordered.

This sequence belongs to the universal ribosomal protein uS3 family. Part of the 30S ribosomal subunit. Forms a tight complex with proteins S10 and S14.

Binds the lower part of the 30S subunit head. Binds mRNA in the 70S ribosome, positioning it for translation. This is Small ribosomal subunit protein uS3 from Dehalococcoides mccartyi (strain CBDB1).